The chain runs to 470 residues: Histidine--tRNA ligase (470 aa).

The protein belongs to the class-II aminoacyl-tRNA synthetase family. Homodimer.

Its subcellular location is the cytoplasm. The enzyme catalyses tRNA(His) + L-histidine + ATP = L-histidyl-tRNA(His) + AMP + diphosphate + H(+). The sequence is that of Histidine--tRNA ligase from Xanthomonas oryzae pv. oryzae (strain PXO99A).